The sequence spans 297 residues: tRNA-cytidine(32) 2-sulfurtransferase (297 aa).

Residues 61–66 carry the PP-loop motif motif; the sequence is SGGKDS. Residues cysteine 136, cysteine 139, and cysteine 227 each coordinate [4Fe-4S] cluster.

It belongs to the TtcA family. As to quaternary structure, homodimer. The cofactor is Mg(2+). Requires [4Fe-4S] cluster as cofactor.

It is found in the cytoplasm. It carries out the reaction cytidine(32) in tRNA + S-sulfanyl-L-cysteinyl-[cysteine desulfurase] + AH2 + ATP = 2-thiocytidine(32) in tRNA + L-cysteinyl-[cysteine desulfurase] + A + AMP + diphosphate + H(+). Its pathway is tRNA modification. Functionally, catalyzes the ATP-dependent 2-thiolation of cytidine in position 32 of tRNA, to form 2-thiocytidine (s(2)C32). The sulfur atoms are provided by the cysteine/cysteine desulfurase (IscS) system. In Paracoccus denitrificans (strain Pd 1222), this protein is tRNA-cytidine(32) 2-sulfurtransferase.